The chain runs to 80 residues: Cytochrome c oxidase subunit 7A1, mitochondrial (80 aa).

A mitochondrion-targeting transit peptide spans methionine 1 to arginine 21. Residues leucine 22–glycine 46 lie on the Mitochondrial matrix side of the membrane. Residues valine 47 to serine 75 form a helical membrane-spanning segment. Residues phenylalanine 76–lysine 80 lie on the Mitochondrial intermembrane side of the membrane.

This sequence belongs to the cytochrome c oxidase VIIa family. In terms of assembly, component of the complex IV (CIV, cytochrome c oxidase), a multisubunit enzyme composed of 14 subunits. The complex is composed of a catalytic core of 3 subunits MT-CO1, MT-CO2 and MT-CO3, encoded in the mitochondrial DNA, and 11 supernumerary subunits COX4I1 (or COX4I2), COX5A, COX5B, COX6A2 (or COX6A1), COX6B1 (or COX6B2), COX6C, COX7A1 (or COX7A2), COX7B, COX7C, COX8B and NDUFA4, which are encoded in the nuclear genome. The complex exists as a monomer or a dimer and forms supercomplexes (SCs) in the inner mitochondrial membrane with NADH-ubiquinone oxidoreductase (complex I, CI) and ubiquinol-cytochrome c oxidoreductase (cytochrome b-c1 complex, complex III, CIII), resulting in different assemblies (supercomplex SCI(1)III(2)IV(1) and megacomplex MCI(2)III(2)IV(2)).

The protein localises to the mitochondrion inner membrane. It functions in the pathway energy metabolism; oxidative phosphorylation. Component of the mitochondrial respiratory complex IV (CIV, also named cytochrome c oxidase complex), the last enzyme in the mitochondrial electron transport chain which drives oxidative phosphorylation. The CIV complex is the component of the respiratory chain that catalyzes the reduction of oxygen to water. Acts as an assembly factor that specifically drives the homodimerization of CIV complexes, mediating the formation of mitochondrial respiratory supercomplexes (respirasomes) containing two CIV: supercomplxes with two molecules of CIV show improved activity. Despite being highly expressed in brown adipose tissue, not required for thermogenesis. The chain is Cytochrome c oxidase subunit 7A1, mitochondrial (COX7A1) from Saimiri sciureus (Common squirrel monkey).